A 376-amino-acid chain; its full sequence is Chaperone protein DnaJ (376 aa).

Positions 5-70 constitute a J domain; it reads DYYEILGVSK…QKRAAYDQYG (66 aa). The segment at 131-209 adopts a CR-type zinc-finger fold; it reads GVTKEIRIPT…CHGHGRVERS (79 aa). Residues Cys144, Cys147, Cys161, Cys164, Cys183, Cys186, Cys197, and Cys200 each contribute to the Zn(2+) site. 4 CXXCXGXG motif repeats span residues 144–151, 161–168, 183–190, and 197–204; these read CDVCHGSG, CPTCHGSG, CPHCQGRG, and CNKCHGHG.

The protein belongs to the DnaJ family. In terms of assembly, homodimer. Zn(2+) serves as cofactor.

It is found in the cytoplasm. Functionally, participates actively in the response to hyperosmotic and heat shock by preventing the aggregation of stress-denatured proteins and by disaggregating proteins, also in an autonomous, DnaK-independent fashion. Unfolded proteins bind initially to DnaJ; upon interaction with the DnaJ-bound protein, DnaK hydrolyzes its bound ATP, resulting in the formation of a stable complex. GrpE releases ADP from DnaK; ATP binding to DnaK triggers the release of the substrate protein, thus completing the reaction cycle. Several rounds of ATP-dependent interactions between DnaJ, DnaK and GrpE are required for fully efficient folding. Also involved, together with DnaK and GrpE, in the DNA replication of plasmids through activation of initiation proteins. This Escherichia coli (strain K12 / DH10B) protein is Chaperone protein DnaJ.